The sequence spans 417 residues: Acetyltransferase nanB (417 aa).

A signal peptide spans 1–24 (MRPSTTTLSLLVFLISSILLATTG). The next 5 helical transmembrane spans lie at 150–170 (LAVS…LKNI), 284–304 (YLNN…FNWI), 307–327 (VQDG…GYFL), 356–376 (VGAL…VYPF), and 389–409 (FVDV…AAAL).

Belongs to the wax synthase family.

Its subcellular location is the membrane. Its pathway is secondary metabolite biosynthesis. In terms of biological role, acetyltransferase; part of the gene cluster that mediates the biosynthesis of the benzazepine alkaloid nanangelenin A which contains an unprecedented 3,4-dihydro-1-benzazepine-2,5-dione-N-prenyl-N-acetoxy-anthranilamide scaffold. The first step of nanangelenin biosynthesis is catalyzed by the indoleamine 2,3-dioxygenase nanC which produces N-formyl-kynurenine through the catabolism of tryptophan. The two-module NRPS nanA then utilizes anthranilate (Ant) and L-kynurenine (L-Kyn) to assemble the dipeptide product nanangelenin B. The first adenylation domain of nanA (A1) loads anthranilate onto the T1 domain, while A2 loads kynurenine, generated through spontaneous nonenzymatic deformylation of the nanC-supplied N-formyl-kynurenine. The peptide bond formation between the tethered amino acids is catalyzed by the first condensation domain (C1) between anthranilate's carbonyl carbon and kynurenine's aliphatic primary amine. The second C domain (C2) catalyzes the final cyclization event between the aromatic amine of kynurenine and the tethered carbonyl carbon, yielding nanangelenin B. The terminal T3 domain enhances the catalytic efficiency of C2, suggesting the T2-tethered Ant-L-Kyn is transferred to T3 prior to cyclization by C2. Once released from nanA, nanangelenin B is then prenylated by the prenyltransferase nanD to form nanangelenin C. Nanangelenin C is then N-hydroxylated by the FAD-dependent monooxygenase nanF and further acetylated by the acetyltransferase nanB to yield nanangelenin F. Finally, the N-methyltransferase nanE methylates the amide nitrogen of 1-benzazepine to convert nanangelenin F into nanangelenin A. NanE is also able to methylate most of the intermediates of the pathway such as nanangelenin B and nanangelenin C to produce nanangelenin D and nanangelenin E, respectively. This Aspergillus nanangensis protein is Acetyltransferase nanB.